A 776-amino-acid chain; its full sequence is Microtubule-associated protein tau (776 aa).

Residues 1–26 (MAEPRQEFEVMEDHAGTYGLGDRKDQ) are compositionally biased toward basic and acidic residues. Disordered stretches follow at residues 1–263 (MAEP…PAKG) and 276–591 (STEI…LKNV). A2 is modified (N-acetylalanine). Residues Y18 and Y29 each carry the phosphotyrosine modification. K44 is covalently cross-linked (Glycyl lysine isopeptide (Lys-Gly) (interchain with G-Cter in ubiquitin)). S46 and S61 each carry phosphoserine. The span at 61 to 71 (SETSDAKSTPT) shows a compositional bias: polar residues. T69, T71, and T111 each carry phosphothreonine. Basic and acidic residues-rich tracts occupy residues 179 to 189 (EGGRHAPELLK) and 207 to 216 (GGKERPGSKE). A Phosphoserine modification is found at S214. Residues 217-228 (EVDEDRDVDESS) are compositionally biased toward acidic residues. The segment covering 314–323 (EQAHSEEHLG) has biased composition (basic and acidic residues). Positions 324–340 (RAAFPGAPGEGPEARGP) are enriched in low complexity. 2 stretches are compositionally biased toward basic and acidic residues: residues 344-356 (EDTK…ESSE) and 381-393 (KSKD…DKKA). Polar residues predominate over residues 440–452 (KYVSSVTPRTGSS). Residues 455–466 (KEMKLKGADGKT) are compositionally biased toward basic and acidic residues. T470 bears the Phosphothreonine mark. R472 carries the post-translational modification Omega-N-methylarginine. Position 480 is an N6,N6-dimethyllysine; alternate (K480). K480 bears the N6-acetyllysine; alternate mark. 3 positions are modified to phosphothreonine: T486, T492, and T498. Phosphoserine occurs at positions 502, 526, and 530. The segment covering 517–528 (RSERGEPPKSGD) has biased composition (basic and acidic residues). Residues 529 to 549 (RSGYSSPGSPGTPGSRSRTPS) show a composition bias toward low complexity. Y532 bears the Phosphotyrosine mark. 3 positions are modified to phosphoserine: S533, S534, and S537. Phosphothreonine is present on residues T540 and T547. S549 bears the Phosphoserine mark. Residue T552 is modified to Phosphothreonine. The residue at position 560 (K560) is an N6-acetyllysine. T566 is modified (phosphothreonine). A phosphoserine mark is found at S570 and S572. 4 Tau/MAP repeats span residues 579-609 (QTAP…GGGK), 610-640 (VQII…GGGS), 641-671 (VQIV…GGGQ), and 672-703 (VEVK…GGGN). Residue K589 forms a Glycyl lysine isopeptide (Lys-Gly) (interchain with G-Cter in ubiquitin) linkage. K594 carries the post-translational modification N6-acetyllysine; alternate. Residue K594 is modified to N6-methyllysine; alternate. Residue K594 forms a Glycyl lysine isopeptide (Lys-Gly) (interchain with G-Cter in ubiquitin); alternate linkage. S597 is subject to Phosphoserine. K602 is covalently cross-linked (Glycyl lysine isopeptide (Lys-Gly) (interchain with G-Cter in ubiquitin)). At K616 the chain carries N6-acetyllysine; alternate. K616 participates in a covalent cross-link: Glycyl lysine isopeptide (Lys-Gly) (interchain with G-Cter in ubiquitin); alternate. 2 positions are modified to phosphoserine: S620 and S624. The residue at position 625 (K625) is an N6-acetyllysine. Phosphoserine is present on S628. At K633 the chain carries N6-acetyllysine; alternate. K633 participates in a covalent cross-link: Glycyl lysine isopeptide (Lys-Gly) (interchain with G-Cter in ubiquitin); alternate. At S640 the chain carries Phosphoserine. Residue K646 is modified to N6,N6-dimethyllysine; alternate. N6-acetyllysine; alternate occurs at positions 646, 652, and 656. Residues K646, K652, and K656 each participate in a glycyl lysine isopeptide (Lys-Gly) (interchain with G-Cter in ubiquitin); alternate cross-link. Phosphoserine is present on S659. Residues K666, K678, and K682 each carry the N6-acetyllysine; alternate modification. Glycyl lysine isopeptide (Lys-Gly) (interchain with G-Cter in ubiquitin); alternate cross-links involve residues K666, K678, and K682. The residue at position 684 (R684) is an Omega-N-methylarginine. A Phosphoserine modification is found at S687. K688 participates in a covalent cross-link: Glycyl lysine isopeptide (Lys-Gly) (interchain with G-Cter in ubiquitin). S691 carries the post-translational modification Phosphoserine. K704 is subject to N6-acetyllysine; alternate. K704 is covalently cross-linked (Glycyl lysine isopeptide (Lys-Gly) (interchain with G-Cter in ubiquitin); alternate). K710 is covalently cross-linked (Glycyl lysine isopeptide (Lys-Gly) (interchain with G-Cter in ubiquitin)). N6-acetyllysine; alternate is present on K720. K720 participates in a covalent cross-link: Glycyl lysine isopeptide (Lys-Gly) (interchain with G-Cter in ubiquitin); alternate. Y729 carries the phosphotyrosine modification. Phosphoserine is present on residues S731 and S735. Residues 733-752 (VVSGDTSPRHLSNVSSTGSI) are disordered. Polar residues predominate over residues 736–751 (GDTSPRHLSNVSSTGS). T738 carries the phosphothreonine modification. S739, S744, S751, and S757 each carry phosphoserine. T762 is modified (phosphothreonine).

In terms of assembly, interacts with MARK1, MARK2, MARK3 and MARK4. Interacts with SQSTM1 when polyubiquitinated. Interacts with PSMC2 through SQSTM1. Interacts with FKBP4. Binds to CSNK1D. Interacts with SGK1. Interacts with EPM2A; the interaction dephosphorylates MAPT at Ser-396. Interacts with PIN1. Interacts with LRRK2. Interacts with LRP1, leading to endocytosis; this interaction is reduced in the presence of LRPAP1/RAP. Polyubiquitinated. Requires functional TRAF6 and may provoke SQSTM1-dependent degradation by the proteasome. In terms of processing, phosphorylation at various serine and threonine residues in S-P or T-P motifs by proline-directed protein kinases (PDPK1, CDK1, CDK5, GSK3, MAPK) (a few sites per protein in interphase, more in mitosis), and at serine residues in K-X-G-S motifs by MAP/microtubule affinity-regulating kinase (MARK1, MARK2, MARK3 or MARK4), causing detachment from microtubules, and their disassembly. Phosphorylation at Ser-597 by BRSK1 and BRSK2 in neurons affects ability to bind microtubules and plays a role in neuron polarization. Phosphorylation at Ser-214 by SGK1 mediates microtubule depolymerization and neurite formation in hippocampal neurons. Phosphorylated by PHK. Dephosphorylation at several serine and threonine residues by the serine/threonine phosphatase PPP5C.

Its subcellular location is the cytoplasm. The protein localises to the cytosol. It localises to the cell membrane. It is found in the cytoskeleton. The protein resides in the cell projection. Its subcellular location is the axon. The protein localises to the dendrite. Promotes microtubule assembly and stability, and might be involved in the establishment and maintenance of neuronal polarity. The C-terminus binds axonal microtubules while the N-terminus binds neural plasma membrane components, suggesting that tau functions as a linker protein between both. Axonal polarity is predetermined by tau localization (in the neuronal cell) in the domain of the cell body defined by the centrosome. The short isoforms allow plasticity of the cytoskeleton whereas the longer isoforms may preferentially play a role in its stabilization. The polypeptide is Microtubule-associated protein tau (MAPT) (Gorilla gorilla gorilla (Western lowland gorilla)).